The following is a 686-amino-acid chain: Acyl-CoA synthetase short-chain family member 3, mitochondrial (686 aa).

Residues 1–29 (MKPSWLQCRKVTSAGGLGGPLPGSSPARG) constitute a mitochondrion transit peptide. A CoA-binding site is contributed by 227–230 (EPGR). ATP-binding positions include 425–427 (GER) and 446–451 (DHWWQT). Residue lysine 518 is modified to N6-succinyllysine. At lysine 524 the chain carries N6-acetyllysine. ATP contacts are provided by aspartate 539, arginine 554, and arginine 565. Arginine 624 serves as a coordination point for CoA.

This sequence belongs to the ATP-dependent AMP-binding enzyme family.

It localises to the mitochondrion matrix. It catalyses the reaction acetate + ATP + CoA = acetyl-CoA + AMP + diphosphate. The enzyme catalyses propanoate + ATP + CoA = propanoyl-CoA + AMP + diphosphate. The catalysed reaction is butanoate + ATP + CoA = butanoyl-CoA + AMP + diphosphate. Catalyzes the synthesis of acetyl-CoA from short-chain fatty acids. Propionate is the preferred substrate. Can utilize acetate and butyrate with a much lower affinity. This Homo sapiens (Human) protein is Acyl-CoA synthetase short-chain family member 3, mitochondrial (ACSS3).